Consider the following 157-residue polypeptide: SsrA-binding protein (157 aa).

Residues 136-151 (KRETSAKRDWSREKQR) show a composition bias toward basic and acidic residues. Residues 136-157 (KRETSAKRDWSREKQRLLKQNS) are disordered.

Belongs to the SmpB family.

The protein resides in the cytoplasm. Functionally, required for rescue of stalled ribosomes mediated by trans-translation. Binds to transfer-messenger RNA (tmRNA), required for stable association of tmRNA with ribosomes. tmRNA and SmpB together mimic tRNA shape, replacing the anticodon stem-loop with SmpB. tmRNA is encoded by the ssrA gene; the 2 termini fold to resemble tRNA(Ala) and it encodes a 'tag peptide', a short internal open reading frame. During trans-translation Ala-aminoacylated tmRNA acts like a tRNA, entering the A-site of stalled ribosomes, displacing the stalled mRNA. The ribosome then switches to translate the ORF on the tmRNA; the nascent peptide is terminated with the 'tag peptide' encoded by the tmRNA and targeted for degradation. The ribosome is freed to recommence translation, which seems to be the essential function of trans-translation. The chain is SsrA-binding protein from Cereibacter sphaeroides (strain ATCC 17029 / ATH 2.4.9) (Rhodobacter sphaeroides).